Reading from the N-terminus, the 146-residue chain is Large ribosomal subunit protein uL16 (146 aa).

This sequence belongs to the universal ribosomal protein uL16 family. Part of the 50S ribosomal subunit.

In terms of biological role, binds 23S rRNA and is also seen to make contacts with the A and possibly P site tRNAs. In Caulobacter sp. (strain K31), this protein is Large ribosomal subunit protein uL16.